A 406-amino-acid polypeptide reads, in one-letter code: Protein IWS1 homolog 2 (406 aa).

Disordered regions lie at residues Met-1–Arg-28 and Asp-41–Val-89. Basic and acidic residues predominate over residues Glu-10–Phe-24. The segment covering Asp-41–Asp-56 has biased composition (acidic residues). Over residues Lys-69–Thr-78 the composition is skewed to basic and acidic residues. The 84-residue stretch at Asn-201–Lys-284 folds into the TFIIS N-terminal domain.

It belongs to the IWS1 family.

The protein localises to the nucleus. Transcription factor involved in RNA polymerase II (RNAPII) transcription regulation. Involved in transcription elongation. May function at post-recruitment and elongation steps of transcription. The protein is Protein IWS1 homolog 2 of Arabidopsis thaliana (Mouse-ear cress).